Reading from the N-terminus, the 75-residue chain is Putative snRNP Sm-like protein (75 aa).

Residues 4 to 75 (RPLDVIHRSL…NVLAISPTEE (72 aa)) form the Sm domain.

The protein belongs to the snRNP Sm proteins family.

This Pyrococcus abyssi (strain GE5 / Orsay) protein is Putative snRNP Sm-like protein.